A 208-amino-acid polypeptide reads, in one-letter code: NAD(P)H-hydrate epimerase (208 aa).

A YjeF N-terminal domain is found at 10 to 208 (IRDAERQTLA…TLGVIMTPAN (199 aa)). (6S)-NADPHX is bound at residue 54-58 (NNGGD). The K(+) site is built by N55 and D117. Residues 121 to 127 (GIGLNRP) and D150 each bind (6S)-NADPHX. Residue S153 participates in K(+) binding.

The protein belongs to the NnrE/AIBP family. K(+) is required as a cofactor.

It catalyses the reaction (6R)-NADHX = (6S)-NADHX. The enzyme catalyses (6R)-NADPHX = (6S)-NADPHX. Catalyzes the epimerization of the S- and R-forms of NAD(P)HX, a damaged form of NAD(P)H that is a result of enzymatic or heat-dependent hydration. This is a prerequisite for the S-specific NAD(P)H-hydrate dehydratase to allow the repair of both epimers of NAD(P)HX. The chain is NAD(P)H-hydrate epimerase from Achromobacter xylosoxidans (strain A8).